We begin with the raw amino-acid sequence, 414 residues long: Glucose-1-phosphate adenylyltransferase (414 aa).

Alpha-D-glucose 1-phosphate contacts are provided by residues Tyr-103, Gly-168, 183-184 (EK), and Ser-201.

Belongs to the bacterial/plant glucose-1-phosphate adenylyltransferase family. As to quaternary structure, homotetramer.

It catalyses the reaction alpha-D-glucose 1-phosphate + ATP + H(+) = ADP-alpha-D-glucose + diphosphate. It participates in glycan biosynthesis; glycogen biosynthesis. Its function is as follows. Involved in the biosynthesis of ADP-glucose, a building block required for the elongation reactions to produce glycogen. Catalyzes the reaction between ATP and alpha-D-glucose 1-phosphate (G1P) to produce pyrophosphate and ADP-Glc. The chain is Glucose-1-phosphate adenylyltransferase from Thermus caldophilus.